The primary structure comprises 409 residues: MNDMSHAPQPAQTKPHVRLVGRVAGVADLFRSSARQTEEARRVPASHIAALRGIGYFDIVKPRAFGGQGGEFAELVEANIELSAACASTGWVAGLLSAHQWLLAMFPEEAQADVWDENPDALLCGSYAPVKMAEAADGGYRLSGKWAFASGCENAQWSLCAAILPPQAKGRPVPAFLLVPASQYAIEDTWHVVGLAGTVSKTLVLDDVFVPKHRVLTFPDATSGHTPGGRFYAQEGLFNMPLLTGIPSCLASTGVGAAKGALAAYVDHVGGRVTRGAVAGGNNRMAEFPTIQLRVAEAAASVDAACEILLRDVARAQALSQARLEGRAEFSVDDRLLSRRGQSFSVSFSLRAVQALNDSTGGVGLDLSNPVQRAWRDANAVGRHISMNWDAVGTMIGQSMLGLEPKGQY.

Belongs to the HpaH/HsaA monooxygenase family. The FADH(2)-dependent resorcinol hydroxylase is composed of two subunits, GraA (the oxygenase component) and GraD (the reductase component). Both subunits are required for activity.

It catalyses the reaction resorcinol + FADH2 + O2 = benzene-1,2,4-triol + FAD + H2O + H(+). It participates in aromatic compound metabolism. Its function is as follows. Involved in the gamma-resorcylate (2,6-dihydroxybenzoate) catabolism. Oxygenase component of the resorcinol hydroxylase, which catalyzes the FADH(2)-dependent conversion of resorcinol to hydroxyquinol. The polypeptide is FADH(2)-dependent resorcinol hydroxylase, oxygenase component (Rhizobium sp. (strain MTP-10005)).